Here is a 55-residue protein sequence, read N- to C-terminus: Large ribosomal subunit protein bL33 (55 aa).

The protein belongs to the bacterial ribosomal protein bL33 family.

The protein is Large ribosomal subunit protein bL33 of Blochmanniella pennsylvanica (strain BPEN).